Consider the following 106-residue polypeptide: MAEERINAEQVQHVASLAKLEFTPDQLAMFTPQLEKIIGMFEELSTVDTTGVPVTSRMSDHTNTLREDVAVKSDEALREALLKNAPETANGLIKVPAIIDESGDGE.

It belongs to the GatC family. In terms of assembly, heterotrimer of A, B and C subunits.

It carries out the reaction L-glutamyl-tRNA(Gln) + L-glutamine + ATP + H2O = L-glutaminyl-tRNA(Gln) + L-glutamate + ADP + phosphate + H(+). The catalysed reaction is L-aspartyl-tRNA(Asn) + L-glutamine + ATP + H2O = L-asparaginyl-tRNA(Asn) + L-glutamate + ADP + phosphate + 2 H(+). Allows the formation of correctly charged Asn-tRNA(Asn) or Gln-tRNA(Gln) through the transamidation of misacylated Asp-tRNA(Asn) or Glu-tRNA(Gln) in organisms which lack either or both of asparaginyl-tRNA or glutaminyl-tRNA synthetases. The reaction takes place in the presence of glutamine and ATP through an activated phospho-Asp-tRNA(Asn) or phospho-Glu-tRNA(Gln). The chain is Aspartyl/glutamyl-tRNA(Asn/Gln) amidotransferase subunit C from Lactiplantibacillus plantarum (strain ATCC BAA-793 / NCIMB 8826 / WCFS1) (Lactobacillus plantarum).